Reading from the N-terminus, the 303-residue chain is Eukaryotic translation initiation factor 3 subunit G (303 aa).

Disordered regions lie at residues 1–32 (MAAVAKPVQAWADDDDIDDGTTERLPDPQTIV), 81–100 (GLSAKDGPGPASDTTSVGEN), 105–126 (PSANWRKDQKDESKDANANAMK), and 181–215 (GAAGGAGAKKGSYVPPALRGDRKEGEKMGGGAGGK). A compositionally biased stretch (basic and acidic residues) spans 109-126 (WRKDQKDESKDANANAMK). The region spanning 223–301 (ATLRVTNVSE…LILRVEFAKK (79 aa)) is the RRM domain.

The protein belongs to the eIF-3 subunit G family. As to quaternary structure, component of the eukaryotic translation initiation factor 3 (eIF-3) complex.

It localises to the cytoplasm. In terms of biological role, RNA-binding component of the eukaryotic translation initiation factor 3 (eIF-3) complex, which is involved in protein synthesis of a specialized repertoire of mRNAs and, together with other initiation factors, stimulates binding of mRNA and methionyl-tRNAi to the 40S ribosome. The eIF-3 complex specifically targets and initiates translation of a subset of mRNAs involved in cell proliferation. This subunit can bind 18S rRNA. This chain is Eukaryotic translation initiation factor 3 subunit G, found in Pyricularia oryzae (strain 70-15 / ATCC MYA-4617 / FGSC 8958) (Rice blast fungus).